Reading from the N-terminus, the 135-residue chain is Small ribosomal subunit protein uS12 (135 aa).

The interval 1 to 29 (MPTINQLVRKGREKVEKKSKAPALQGNPQ) is disordered. Asp-89 carries the 3-methylthioaspartic acid modification. Residues 106-135 (GVKDRKQSRSKYGAKRPKPGQAAATTGKKK) form a disordered region. Over residues 113-123 (SRSKYGAKRPK) the composition is skewed to basic residues.

The protein belongs to the universal ribosomal protein uS12 family. As to quaternary structure, part of the 30S ribosomal subunit. Contacts proteins S8 and S17. May interact with IF1 in the 30S initiation complex.

Its function is as follows. With S4 and S5 plays an important role in translational accuracy. Functionally, interacts with and stabilizes bases of the 16S rRNA that are involved in tRNA selection in the A site and with the mRNA backbone. Located at the interface of the 30S and 50S subunits, it traverses the body of the 30S subunit contacting proteins on the other side and probably holding the rRNA structure together. The combined cluster of proteins S8, S12 and S17 appears to hold together the shoulder and platform of the 30S subunit. This Sulfurihydrogenibium sp. (strain YO3AOP1) protein is Small ribosomal subunit protein uS12.